Reading from the N-terminus, the 427-residue chain is Adenylosuccinate synthetase (427 aa).

Residues 12 to 18 and 40 to 42 each bind GTP; these read GDEGKGK and GHT. Aspartate 13 acts as the Proton acceptor in catalysis. Mg(2+) contacts are provided by aspartate 13 and glycine 40. IMP contacts are provided by residues 13–16, 38–41, threonine 128, arginine 142, glutamine 223, threonine 238, and arginine 302; these read DEGK and NAGH. Catalysis depends on histidine 41, which acts as the Proton donor. 298–304 contacts substrate; that stretch reads TTTGRPR. GTP-binding positions include arginine 304, 330-332, and 412-414; these read KLD and AVG.

It belongs to the adenylosuccinate synthetase family. In terms of assembly, homodimer. Mg(2+) serves as cofactor.

The protein resides in the cytoplasm. It carries out the reaction IMP + L-aspartate + GTP = N(6)-(1,2-dicarboxyethyl)-AMP + GDP + phosphate + 2 H(+). It participates in purine metabolism; AMP biosynthesis via de novo pathway; AMP from IMP: step 1/2. In terms of biological role, plays an important role in the de novo pathway of purine nucleotide biosynthesis. Catalyzes the first committed step in the biosynthesis of AMP from IMP. The protein is Adenylosuccinate synthetase of Moorella thermoacetica (strain ATCC 39073 / JCM 9320).